The sequence spans 254 residues: Phosphatidylglycerol--prolipoprotein diacylglyceryl transferase (254 aa).

The next 4 membrane-spanning stretches (helical) occupy residues 11 to 31, 49 to 69, 84 to 104, and 109 to 129; these read LAIRWYGVIISMGTALGLLLA, FLIAFPSAIIGARLYYVIFEF, QGGLAIHGGIIFGVLAVYIYL, and ESFFEYVDVAAPSIILGQAIG. An a 1,2-diacyl-sn-glycero-3-phospho-(1'-sn-glycerol)-binding site is contributed by Arg130. Helical transmembrane passes span 169–189, 196–216, and 228–248; these read PTFLYESIWNFIICIFLVYLL, GIVFMAYIGLYSLGRFFIEGL, and VAQLISVLGIILSIFFIYNII.

This sequence belongs to the Lgt family.

It is found in the cell membrane. The enzyme catalyses L-cysteinyl-[prolipoprotein] + a 1,2-diacyl-sn-glycero-3-phospho-(1'-sn-glycerol) = an S-1,2-diacyl-sn-glyceryl-L-cysteinyl-[prolipoprotein] + sn-glycerol 1-phosphate + H(+). It participates in protein modification; lipoprotein biosynthesis (diacylglyceryl transfer). Its function is as follows. Catalyzes the transfer of the diacylglyceryl group from phosphatidylglycerol to the sulfhydryl group of the N-terminal cysteine of a prolipoprotein, the first step in the formation of mature lipoproteins. The polypeptide is Phosphatidylglycerol--prolipoprotein diacylglyceryl transferase (Clostridium botulinum (strain ATCC 19397 / Type A)).